We begin with the raw amino-acid sequence, 149 residues long: Nucleoside diphosphate kinase (149 aa).

Residues K9, F57, R85, T91, R102, and N112 each contribute to the ATP site. The Pros-phosphohistidine intermediate role is filled by H115.

This sequence belongs to the NDK family. In terms of assembly, homotetramer. The cofactor is Mg(2+).

The protein resides in the cytoplasm. It catalyses the reaction a 2'-deoxyribonucleoside 5'-diphosphate + ATP = a 2'-deoxyribonucleoside 5'-triphosphate + ADP. The enzyme catalyses a ribonucleoside 5'-diphosphate + ATP = a ribonucleoside 5'-triphosphate + ADP. Its function is as follows. Major role in the synthesis of nucleoside triphosphates other than ATP. The ATP gamma phosphate is transferred to the NDP beta phosphate via a ping-pong mechanism, using a phosphorylated active-site intermediate. This is Nucleoside diphosphate kinase from Nostoc punctiforme (strain ATCC 29133 / PCC 73102).